A 30-amino-acid chain; its full sequence is VTSITLNLANPTAGQYSSFVDKIRNNVRDP.

It belongs to the ribosome-inactivating protein family. Type 1 RIP subfamily. Expressed in seeds.

The catalysed reaction is Endohydrolysis of the N-glycosidic bond at one specific adenosine on the 28S rRNA.. Functionally, exhibits N-glycosylase activity. Catalyzes the release of one adenine from a ribosome. Acts as a ribosome-inactivating protein and inhibits protein synthesis in a rabbit-reticulocyte lysate system and in various cell lines (in vitro). In Saponaria ocymoides (Rock soapwort), this protein is rRNA N-glycosylase.